The sequence spans 590 residues: Arginine--tRNA ligase (590 aa).

The short motif at proline 130–histidine 140 is the 'HIGH' region element.

The protein belongs to the class-I aminoacyl-tRNA synthetase family. As to quaternary structure, monomer.

The protein resides in the cytoplasm. It catalyses the reaction tRNA(Arg) + L-arginine + ATP = L-arginyl-tRNA(Arg) + AMP + diphosphate. This Synechococcus sp. (strain CC9311) protein is Arginine--tRNA ligase.